The sequence spans 312 residues: Acetyl-coenzyme A carboxylase carboxyl transferase subunit alpha (312 aa).

The CoA carboxyltransferase C-terminal domain maps to 36–286; it reads RLDKEVKSIY…KEYFLDALRT (251 aa).

This sequence belongs to the AccA family. As to quaternary structure, acetyl-CoA carboxylase is a heterohexamer composed of biotin carboxyl carrier protein (AccB), biotin carboxylase (AccC) and two subunits each of ACCase subunit alpha (AccA) and ACCase subunit beta (AccD).

It is found in the cytoplasm. It carries out the reaction N(6)-carboxybiotinyl-L-lysyl-[protein] + acetyl-CoA = N(6)-biotinyl-L-lysyl-[protein] + malonyl-CoA. It functions in the pathway lipid metabolism; malonyl-CoA biosynthesis; malonyl-CoA from acetyl-CoA: step 1/1. In terms of biological role, component of the acetyl coenzyme A carboxylase (ACC) complex. First, biotin carboxylase catalyzes the carboxylation of biotin on its carrier protein (BCCP) and then the CO(2) group is transferred by the carboxyltransferase to acetyl-CoA to form malonyl-CoA. In Helicobacter pylori (strain Shi470), this protein is Acetyl-coenzyme A carboxylase carboxyl transferase subunit alpha.